Here is a 292-residue protein sequence, read N- to C-terminus: Phosphatidylserine decarboxylase proenzyme (292 aa).

Active-site charge relay system; for autoendoproteolytic cleavage activity residues include Asp-92, His-149, and Ser-256. The active-site Schiff-base intermediate with substrate; via pyruvic acid; for decarboxylase activity is Ser-256. Pyruvic acid (Ser); by autocatalysis is present on Ser-256.

It belongs to the phosphatidylserine decarboxylase family. PSD-B subfamily. Prokaryotic type I sub-subfamily. As to quaternary structure, heterodimer of a large membrane-associated beta subunit and a small pyruvoyl-containing alpha subunit. Pyruvate serves as cofactor. Post-translationally, is synthesized initially as an inactive proenzyme. Formation of the active enzyme involves a self-maturation process in which the active site pyruvoyl group is generated from an internal serine residue via an autocatalytic post-translational modification. Two non-identical subunits are generated from the proenzyme in this reaction, and the pyruvate is formed at the N-terminus of the alpha chain, which is derived from the carboxyl end of the proenzyme. The autoendoproteolytic cleavage occurs by a canonical serine protease mechanism, in which the side chain hydroxyl group of the serine supplies its oxygen atom to form the C-terminus of the beta chain, while the remainder of the serine residue undergoes an oxidative deamination to produce ammonia and the pyruvoyl prosthetic group on the alpha chain. During this reaction, the Ser that is part of the protease active site of the proenzyme becomes the pyruvoyl prosthetic group, which constitutes an essential element of the active site of the mature decarboxylase.

The protein localises to the cell membrane. It catalyses the reaction a 1,2-diacyl-sn-glycero-3-phospho-L-serine + H(+) = a 1,2-diacyl-sn-glycero-3-phosphoethanolamine + CO2. The protein operates within phospholipid metabolism; phosphatidylethanolamine biosynthesis; phosphatidylethanolamine from CDP-diacylglycerol: step 2/2. Functionally, catalyzes the formation of phosphatidylethanolamine (PtdEtn) from phosphatidylserine (PtdSer). The sequence is that of Phosphatidylserine decarboxylase proenzyme from Baumannia cicadellinicola subsp. Homalodisca coagulata.